A 234-amino-acid chain; its full sequence is Octanoyltransferase (234 aa).

The region spanning 50-234 (GEAPELVWLL…AFEQVFGPTR (185 aa)) is the BPL/LPL catalytic domain. Residues 88–95 (RGGQITYH), 163–165 (AIG), and 176–178 (GIA) contribute to the substrate site. Residue C194 is the Acyl-thioester intermediate of the active site.

Belongs to the LipB family.

Its subcellular location is the cytoplasm. It catalyses the reaction octanoyl-[ACP] + L-lysyl-[protein] = N(6)-octanoyl-L-lysyl-[protein] + holo-[ACP] + H(+). Its pathway is protein modification; protein lipoylation via endogenous pathway; protein N(6)-(lipoyl)lysine from octanoyl-[acyl-carrier-protein]: step 1/2. Catalyzes the transfer of endogenously produced octanoic acid from octanoyl-acyl-carrier-protein onto the lipoyl domains of lipoate-dependent enzymes. Lipoyl-ACP can also act as a substrate although octanoyl-ACP is likely to be the physiological substrate. The polypeptide is Octanoyltransferase (Rhodopseudomonas palustris (strain BisA53)).